Consider the following 162-residue polypeptide: Anaerobic nitrite reductase GLB1 (162 aa).

One can recognise a Globin domain in the interval 9–159 (VFSEEKEALV…LVAAIKQEMK (151 aa)). Positions 42–46 (EIAPS) match the Homodimerization motif. Lys-66, His-70, Arg-100, Thr-104, and His-105 together coordinate heme b. The short motif at 112–124 (DGHFEVTRFALLE) is the Homodimerization element.

It belongs to the plant globin family. Homodimer. Heme b is required as a cofactor. Seeds and roots.

Its subcellular location is the cytoplasm. It localises to the nucleus. The catalysed reaction is Fe(III)-heme b-[protein] + nitric oxide + H2O = Fe(II)-heme b-[protein] + nitrite + 2 H(+). In terms of biological role, phytoglobin that reduces nitrite to nitric oxide (NO) under anoxic conditions (e.g. during flooding or in waterlogged soil). May not function as an oxygen storage or transport protein. Has an unusually high affinity for O(2) through an hexacoordinate heme iron because of a very low dissociation constant. This is Anaerobic nitrite reductase GLB1 from Hordeum vulgare (Barley).